The primary structure comprises 163 residues: Protein YtsP (163 aa).

This sequence belongs to the free Met sulfoxide reductase family.

In Bacillus subtilis (strain 168), this protein is Protein YtsP (ytsP).